The primary structure comprises 469 residues: Cysteine--tRNA ligase (469 aa).

Residue Cys-33 coordinates Zn(2+). The 'HIGH' region motif lies at 35–45 (PTVYNLLHIGN). Cys-214, His-239, and Glu-243 together coordinate Zn(2+). Residues 271-275 (KMSKS) carry the 'KMSKS' region motif. Lys-274 provides a ligand contact to ATP.

It belongs to the class-I aminoacyl-tRNA synthetase family. As to quaternary structure, monomer. The cofactor is Zn(2+).

The protein resides in the cytoplasm. The enzyme catalyses tRNA(Cys) + L-cysteine + ATP = L-cysteinyl-tRNA(Cys) + AMP + diphosphate. In Petrotoga mobilis (strain DSM 10674 / SJ95), this protein is Cysteine--tRNA ligase.